Consider the following 185-residue polypeptide: Prenylated Rab acceptor protein 1 (185 aa).

Over 1 to 78 (MAVEKDQQKD…RNVEYYQSNY (78 aa)) the chain is Cytoplasmic. A required for interaction with prenylated RAB3A and VAMP2 region spans residues 30–54 (AGREWLERRRATIRSWGSFVDQRRF). The next 2 helical transmembrane spans lie at 79–94 (VFVF…ATSP) and 95–112 (MLLV…ILYL). The Cytoplasmic segment spans residues 113 to 131 (RTLQSKFVLFGREVSPAHQ). A run of 2 helical transmembrane segments spans residues 132-148 (YALA…LAGA) and 149-165 (GSAV…VIGS). Residues 165 to 185 (SHAAFHQIEAVDGEELQMEPV) are required for interaction with GDI1. The Cytoplasmic portion of the chain corresponds to 166 to 185 (HAAFHQIEAVDGEELQMEPV). Residues 175–185 (VDGEELQMEPV) form a required for interaction with prenylated RAB3A and VAMP2 region. The segment at 175–185 (VDGEELQMEPV) is homodimerization.

It belongs to the PRA1 family. As to quaternary structure, homodimer. Interacts with VAMP2 (synaptobrevin-2), prenylated Rab proteins, GDI1, NDRG1 and PCLO.

Its subcellular location is the cell membrane. It localises to the cytoplasm. It is found in the golgi apparatus. The protein localises to the cytoplasmic vesicle. The protein resides in the secretory vesicle. Its subcellular location is the synaptic vesicle. Its function is as follows. General Rab protein regulator required for vesicle formation from the Golgi complex. May control vesicle docking and fusion by mediating the action of Rab GTPases to the SNARE complexes. In addition it inhibits the removal of Rab GTPases from the membrane by GDI1. This chain is Prenylated Rab acceptor protein 1 (RABAC1), found in Bos taurus (Bovine).